Reading from the N-terminus, the 557-residue chain is Vacuolar protein sorting-associated protein 30 (557 aa).

Disordered stretches follow at residues 93–149 and 218–238; these read DDDN…ENQQ and NKEISESNKEKQYSHNLSEKE. Residues 135-147 are compositionally biased toward acidic residues; that stretch reads DEEEQEATDEDEN. At T142 the chain carries Phosphothreonine. Positions 189–322 form a coiled coil; the sequence is LINRLKSEYD…QLDKLRKINI (134 aa). Residues 320-539 are BARA; it reads INIFNATFKI…LAFSSNLLSK (220 aa). A required for membrane-association, autophagic function during starvation and normal autophagosome morphology region spans residues 515–540; it reads WTTAMKFLLTNVKWLLAFSSNLLSKS.

Belongs to the beclin family. Component of the autophagy-specific VPS34 PI3-kinase complex I composed of VPS15, VPS30, VPS34, ATG14 and ATG38; and of the VPS34 PI3-kinase complex II composed of VPS15, VPS30, VPS34 and VPS38.

It localises to the endosome membrane. The protein localises to the vacuole membrane. Its subcellular location is the preautophagosomal structure membrane. Its function is as follows. Required for cytoplasm to vacuole transport (Cvt), autophagy, nucleophagy, and mitophagy, as a part of the autophagy-specific VPS34 PI3-kinase complex I. This complex is essential to recruit the ATG8-phosphatidylinositol conjugate and the ATG12-ATG5 conjugate to the pre-autophagosomal structure. Also involved in endosome-to-Golgi retrograde transport as part of the VPS34 PI3-kinase complex II. This second complex is required for the endosome-to-Golgi retrieval of PEP1 and KEX2, and the recruitment of VPS5 and VPS7, two components of the retromer complex, to endosomal membranes (probably through the synthesis of a specific pool of phosphatidylinositol 3-phosphate recruiting the retromer to the endosomes). Also plays a role in regulation of filamentous growth. This Saccharomyces cerevisiae (strain ATCC 204508 / S288c) (Baker's yeast) protein is Vacuolar protein sorting-associated protein 30.